The following is a 261-amino-acid chain: Putative imidazole glycerol phosphate synthase subunit hisF2 (261 aa).

Asp138 is a catalytic residue.

This sequence belongs to the HisA/HisF family. As to quaternary structure, heterodimer of HisH and HisF.

The protein resides in the cytoplasm. The enzyme catalyses 5-[(5-phospho-1-deoxy-D-ribulos-1-ylimino)methylamino]-1-(5-phospho-beta-D-ribosyl)imidazole-4-carboxamide + L-glutamine = D-erythro-1-(imidazol-4-yl)glycerol 3-phosphate + 5-amino-1-(5-phospho-beta-D-ribosyl)imidazole-4-carboxamide + L-glutamate + H(+). Its pathway is amino-acid biosynthesis; L-histidine biosynthesis; L-histidine from 5-phospho-alpha-D-ribose 1-diphosphate: step 5/9. Its function is as follows. IGPS catalyzes the conversion of PRFAR and glutamine to IGP, AICAR and glutamate. The HisF subunit catalyzes the cyclization activity that produces IGP and AICAR from PRFAR using the ammonia provided by the HisH subunit. This chain is Putative imidazole glycerol phosphate synthase subunit hisF2 (hisF2), found in Prochlorococcus marinus (strain MIT 9313).